Consider the following 178-residue polypeptide: Large ribosomal subunit protein uL6 (178 aa).

Belongs to the universal ribosomal protein uL6 family. Part of the 50S ribosomal subunit.

In terms of biological role, this protein binds to the 23S rRNA, and is important in its secondary structure. It is located near the subunit interface in the base of the L7/L12 stalk, and near the tRNA binding site of the peptidyltransferase center. In Desulfatibacillum aliphaticivorans, this protein is Large ribosomal subunit protein uL6.